The sequence spans 252 residues: Ribosomal RNA small subunit methyltransferase J (252 aa).

Residues 101–102 (RD), 117–118 (ER), 153–154 (SS), and Asp171 each bind S-adenosyl-L-methionine.

It belongs to the methyltransferase superfamily. RsmJ family.

The protein resides in the cytoplasm. The catalysed reaction is guanosine(1516) in 16S rRNA + S-adenosyl-L-methionine = N(2)-methylguanosine(1516) in 16S rRNA + S-adenosyl-L-homocysteine + H(+). Specifically methylates the guanosine in position 1516 of 16S rRNA. The sequence is that of Ribosomal RNA small subunit methyltransferase J from Salmonella heidelberg (strain SL476).